We begin with the raw amino-acid sequence, 358 residues long: Magnesium-protoporphyrin IX monomethyl ester [oxidative] cyclase 2 (358 aa).

Belongs to the AcsF family. It depends on Fe cation as a cofactor.

The enzyme catalyses Mg-protoporphyrin IX 13-monomethyl ester + 3 NADPH + 3 O2 + 2 H(+) = 3,8-divinyl protochlorophyllide a + 3 NADP(+) + 5 H2O. Its pathway is porphyrin-containing compound metabolism; chlorophyll biosynthesis (light-independent). Functionally, catalyzes the formation of the isocyclic ring in chlorophyll biosynthesis. Mediates the cyclase reaction, which results in the formation of divinylprotochlorophyllide (Pchlide) characteristic of all chlorophylls from magnesium-protoporphyrin IX 13-monomethyl ester (MgPMME). The polypeptide is Magnesium-protoporphyrin IX monomethyl ester [oxidative] cyclase 2 (Nostoc sp. (strain PCC 7120 / SAG 25.82 / UTEX 2576)).